Here is a 98-residue protein sequence, read N- to C-terminus: R.appendiculatus Kunitz/BPTI-like protein (98 aa).

An N-terminal signal peptide occupies residues M1–G23. 4 disulfides stabilise this stretch: C36–C51, C43–C83, C49–C96, and C74–C92.

As to quaternary structure, monomer. Expressed in salivary glands.

The protein resides in the secreted. Functionally, activates large conductance calcium-activated potassium channels (maxiK, KCNMA1/KCNMB), when tested at micromolar concentrations, suggesting a potential mechanism for regulating host blood supply during feeding. Shows no antiprotease activity, and does not prevent ADP-, PAF- or collagen-induced platelet aggregation. Has no effect on blood coagulation and does not inhibit the alternative or classical complement cascades. This chain is R.appendiculatus Kunitz/BPTI-like protein, found in Rhipicephalus appendiculatus (Brown ear tick).